We begin with the raw amino-acid sequence, 368 residues long: Queuine tRNA-ribosyltransferase (368 aa).

The Proton acceptor role is filled by D89. Substrate is bound by residues 89-93 (DSGGF), D143, Q187, and G214. D264 acts as the Nucleophile in catalysis. The tract at residues 269–273 (TRNAR) is RNA binding; important for wobble base 34 recognition. Residues C302, C304, C307, and H333 each contribute to the Zn(2+) site.

Belongs to the queuine tRNA-ribosyltransferase family. Homodimer. Within each dimer, one monomer is responsible for RNA recognition and catalysis, while the other monomer binds to the replacement base PreQ1. Zn(2+) serves as cofactor.

The catalysed reaction is 7-aminomethyl-7-carbaguanine + guanosine(34) in tRNA = 7-aminomethyl-7-carbaguanosine(34) in tRNA + guanine. It functions in the pathway tRNA modification; tRNA-queuosine biosynthesis. In terms of biological role, catalyzes the base-exchange of a guanine (G) residue with the queuine precursor 7-aminomethyl-7-deazaguanine (PreQ1) at position 34 (anticodon wobble position) in tRNAs with GU(N) anticodons (tRNA-Asp, -Asn, -His and -Tyr). Catalysis occurs through a double-displacement mechanism. The nucleophile active site attacks the C1' of nucleotide 34 to detach the guanine base from the RNA, forming a covalent enzyme-RNA intermediate. The proton acceptor active site deprotonates the incoming PreQ1, allowing a nucleophilic attack on the C1' of the ribose to form the product. After dissociation, two additional enzymatic reactions on the tRNA convert PreQ1 to queuine (Q), resulting in the hypermodified nucleoside queuosine (7-(((4,5-cis-dihydroxy-2-cyclopenten-1-yl)amino)methyl)-7-deazaguanosine). This chain is Queuine tRNA-ribosyltransferase, found in Blochmanniella pennsylvanica (strain BPEN).